The primary structure comprises 379 residues: Leukocyte elastase inhibitor A (379 aa).

Serine 300 is modified (phosphoserine).

The protein belongs to the serpin family. Ov-serpin subfamily. Monomer.

The protein localises to the secreted. It is found in the cytoplasm. It localises to the cytolytic granule. Its subcellular location is the early endosome. Functionally, regulates the activity of the neutrophil proteases. This is Leukocyte elastase inhibitor A (Serpinb1a) from Rattus norvegicus (Rat).